We begin with the raw amino-acid sequence, 299 residues long: Lipoyl synthase 2 (299 aa).

The [4Fe-4S] cluster site is built by Cys-43, Cys-48, Cys-54, Cys-69, Cys-73, Cys-76, and Ser-294. In terms of domain architecture, Radical SAM core spans Tyr-55–Ala-283.

Belongs to the radical SAM superfamily. Lipoyl synthase family. Requires [4Fe-4S] cluster as cofactor.

The protein resides in the cytoplasm. The enzyme catalyses [[Fe-S] cluster scaffold protein carrying a second [4Fe-4S](2+) cluster] + N(6)-octanoyl-L-lysyl-[protein] + 2 oxidized [2Fe-2S]-[ferredoxin] + 2 S-adenosyl-L-methionine + 4 H(+) = [[Fe-S] cluster scaffold protein] + N(6)-[(R)-dihydrolipoyl]-L-lysyl-[protein] + 4 Fe(3+) + 2 hydrogen sulfide + 2 5'-deoxyadenosine + 2 L-methionine + 2 reduced [2Fe-2S]-[ferredoxin]. It participates in protein modification; protein lipoylation via endogenous pathway; protein N(6)-(lipoyl)lysine from octanoyl-[acyl-carrier-protein]: step 2/2. Functionally, catalyzes the radical-mediated insertion of two sulfur atoms into the C-6 and C-8 positions of the octanoyl moiety bound to the lipoyl domains of lipoate-dependent enzymes, thereby converting the octanoylated domains into lipoylated derivatives. The chain is Lipoyl synthase 2 from Parasynechococcus marenigrum (strain WH8102).